Reading from the N-terminus, the 218-residue chain is Octanoyltransferase (218 aa).

A BPL/LPL catalytic domain is found at 27-210 (TGGEDTLYLV…QFLAIFTHPA (184 aa)). Substrate-binding positions include 72–79 (RGGNITCH), 139–141 (SIG), and 152–154 (GLA). C170 functions as the Acyl-thioester intermediate in the catalytic mechanism.

Belongs to the LipB family.

It is found in the cytoplasm. It carries out the reaction octanoyl-[ACP] + L-lysyl-[protein] = N(6)-octanoyl-L-lysyl-[protein] + holo-[ACP] + H(+). It participates in protein modification; protein lipoylation via endogenous pathway; protein N(6)-(lipoyl)lysine from octanoyl-[acyl-carrier-protein]: step 1/2. In terms of biological role, catalyzes the transfer of endogenously produced octanoic acid from octanoyl-acyl-carrier-protein onto the lipoyl domains of lipoate-dependent enzymes. Lipoyl-ACP can also act as a substrate although octanoyl-ACP is likely to be the physiological substrate. This chain is Octanoyltransferase, found in Nitratidesulfovibrio vulgaris (strain ATCC 29579 / DSM 644 / CCUG 34227 / NCIMB 8303 / VKM B-1760 / Hildenborough) (Desulfovibrio vulgaris).